The following is a 314-amino-acid chain: 4-hydroxy-3-methylbut-2-enyl diphosphate reductase (314 aa).

C12 contacts [4Fe-4S] cluster. Positions 41 and 74 each coordinate (2E)-4-hydroxy-3-methylbut-2-enyl diphosphate. H41 and H74 together coordinate dimethylallyl diphosphate. 2 residues coordinate isopentenyl diphosphate: H41 and H74. C96 is a binding site for [4Fe-4S] cluster. H124 serves as a coordination point for (2E)-4-hydroxy-3-methylbut-2-enyl diphosphate. Dimethylallyl diphosphate is bound at residue H124. H124 contributes to the isopentenyl diphosphate binding site. The active-site Proton donor is E126. T168 serves as a coordination point for (2E)-4-hydroxy-3-methylbut-2-enyl diphosphate. C198 contributes to the [4Fe-4S] cluster binding site. (2E)-4-hydroxy-3-methylbut-2-enyl diphosphate is bound by residues S226, S227, N228, and S270. Dimethylallyl diphosphate is bound by residues S226, S227, N228, and S270. Positions 226, 227, 228, and 270 each coordinate isopentenyl diphosphate.

It belongs to the IspH family. [4Fe-4S] cluster serves as cofactor.

It catalyses the reaction isopentenyl diphosphate + 2 oxidized [2Fe-2S]-[ferredoxin] + H2O = (2E)-4-hydroxy-3-methylbut-2-enyl diphosphate + 2 reduced [2Fe-2S]-[ferredoxin] + 2 H(+). The catalysed reaction is dimethylallyl diphosphate + 2 oxidized [2Fe-2S]-[ferredoxin] + H2O = (2E)-4-hydroxy-3-methylbut-2-enyl diphosphate + 2 reduced [2Fe-2S]-[ferredoxin] + 2 H(+). The protein operates within isoprenoid biosynthesis; dimethylallyl diphosphate biosynthesis; dimethylallyl diphosphate from (2E)-4-hydroxy-3-methylbutenyl diphosphate: step 1/1. It participates in isoprenoid biosynthesis; isopentenyl diphosphate biosynthesis via DXP pathway; isopentenyl diphosphate from 1-deoxy-D-xylulose 5-phosphate: step 6/6. Functionally, catalyzes the conversion of 1-hydroxy-2-methyl-2-(E)-butenyl 4-diphosphate (HMBPP) into a mixture of isopentenyl diphosphate (IPP) and dimethylallyl diphosphate (DMAPP). Acts in the terminal step of the DOXP/MEP pathway for isoprenoid precursor biosynthesis. The chain is 4-hydroxy-3-methylbut-2-enyl diphosphate reductase from Pseudomonas aeruginosa (strain ATCC 15692 / DSM 22644 / CIP 104116 / JCM 14847 / LMG 12228 / 1C / PRS 101 / PAO1).